Here is a 680-residue protein sequence, read N- to C-terminus: ABC transporter B family member 24, mitochondrial (680 aa).

The N-terminal 75 residues, 1-75 (MMRVSQLQLC…MFFSTSTSAP (75 aa)), are a transit peptide targeting the mitochondrion. The 295-residue stretch at 108–402 (VISAFACLVG…LGVVYSDTVQ (295 aa)) folds into the ABC transmembrane type-1 domain. 6 helical membrane-spanning segments follow: residues 109 to 129 (ISAF…PFLF), 145 to 165 (NPYL…YGIA), 232 to 252 (AMVF…CILA), 255 to 275 (FGAV…AFTL), 340 to 360 (FALL…TAMV), and 376 to 396 (LVMV…LGVV). The ABC transporter domain occupies 439–673 (ISFENVHFSY…SGRYAKLWTQ (235 aa)). ATP contacts are provided by residues Tyr-448 and 472–483 (GSSGSGKSTILR).

Belongs to the ABC transporter superfamily. ABCB family. Heavy Metal importer (TC 3.A.1.210) subfamily. In terms of assembly, homodimer. Mostly expressed at low levels in roots and flowers.

It localises to the mitochondrion inner membrane. Performs an essential function in the generation of cytoplasmic iron-sulfur proteins by mediating export of Fe/S cluster precursors synthesized by NFS1 and other mitochondrial proteins. Not involved in the export of cyclic pyranopterin monophosphate (cPMP) from mitochondria to the cytosol. The chain is ABC transporter B family member 24, mitochondrial (ABCB24) from Arabidopsis thaliana (Mouse-ear cress).